We begin with the raw amino-acid sequence, 397 residues long: Fractalkine (397 aa).

An N-terminal signal peptide occupies residues 1 to 24; it reads MAPISLSWLLRLATFCHLTVLLAG. The interval 25–100 is chemokine and involved in interaction with ITGAV:ITGB3 and ITGA4:ITGB1; sequence QHHGVTKCNI…RQAAALTRNG (76 aa). Over 25-341 the chain is Extracellular; sequence QHHGVTKCNI…PDAQAATRRQ (317 aa). 2 cysteine pairs are disulfide-bonded: Cys-32/Cys-58 and Cys-36/Cys-74. N-linked (GlcNAc...) asparagine glycosylation occurs at Asn-33. A mucin-like stalk region spans residues 101–341; it reads GTFEKQIGEV…PDAQAATRRQ (241 aa). 2 disordered regions span residues 128–265 and 289–309; these read EPEA…REEM and VPVSSEGTPSREPVASGSWTP. Positions 133–147 are enriched in polar residues; that stretch reads GESSSLEPTPSSQEA. O-linked (GalNAc...) threonine glycosylation occurs at Thr-183. A compositionally biased stretch (polar residues) spans 193-202; sequence TAATWQSSAP. A compositionally biased stretch (low complexity) spans 219–243; that stretch reads PSTQDPSTQASTASSPAPEENAPSE. Ser-253 carries an O-linked (GalNAc...) serine glycan. Residue Thr-329 is glycosylated (O-linked (GalNAc...) threonine). A helical membrane pass occupies residues 342 to 362; sequence AVGLLAFLGLLFCLGVAMFTY. The Cytoplasmic portion of the chain corresponds to 363–397; it reads QSLQGCPRKMAGEMAEGLRYIPRSCGSNSYVLVPV.

This sequence belongs to the intercrine delta family. In terms of assembly, monomer. Forms a ternary complex with CX3CR1 and ITGAV:ITGB3 or ITGA4:ITGB1. As to quaternary structure, (Microbial infection) Interacts with pox virus crmD; this inhibits cell migration mediated by CX3CL1. (Microbial infection) Interacts (via N-terminus) with human cytomegalovirus (HHV-5) US28. In terms of assembly, (Microbial infection) Interacts with P.falciparum (strain 3D7) CBP1 and CBP2 (via their extracellular domains); the interaction mediates the adhesion of infected erythrocytes with endothelial cells. A soluble short 95 kDa form may be released by proteolytic cleavage from the long membrane-anchored form. In terms of processing, O-glycosylated with core 1 or possibly core 8 glycans. As to expression, expressed in the seminal plasma, endometrial fluid and follicular fluid (at protein level). Small intestine, colon, testis, prostate, heart, brain, lung, skeletal muscle, kidney and pancreas. Most abundant in the brain and heart.

The protein resides in the cell membrane. The protein localises to the secreted. In terms of biological role, chemokine that acts as a ligand for both CX3CR1 and integrins ITGAV:ITGB3 and ITGA4:ITGB1. The CX3CR1-CX3CL1 signaling exerts distinct functions in different tissue compartments, such as immune response, inflammation, cell adhesion and chemotaxis. Regulates leukocyte adhesion and migration processes at the endothelium. Can activate integrins in both a CX3CR1-dependent and CX3CR1-independent manner. In the presence of CX3CR1, activates integrins by binding to the classical ligand-binding site (site 1) in integrins. In the absence of CX3CR1, binds to a second site (site 2) in integrins which is distinct from site 1 and enhances the binding of other integrin ligands to site 1. Functionally, the soluble form is chemotactic for T-cells and monocytes, but not for neutrophils. Its function is as follows. The membrane-bound form promotes adhesion of those leukocytes to endothelial cells. (Microbial infection) Mediates the cytoadherence of erythrocytes infected with parasite P.falciparum (strain 3D7) with endothelial cells by interacting with P.falciparum CBP1 and CBP2 expressed at the surface of erythrocytes. The adhesion prevents the elimination of infected erythrocytes by the spleen. The polypeptide is Fractalkine (Homo sapiens (Human)).